Consider the following 149-residue polypeptide: Nucleoside diphosphate kinase 1 (149 aa).

Lys-9, Phe-57, Arg-85, Thr-91, Arg-102, and Asn-112 together coordinate ATP. His-115 functions as the Pros-phosphohistidine intermediate in the catalytic mechanism.

In terms of assembly, homohexamer. Requires Mg(2+) as cofactor.

The enzyme catalyses a 2'-deoxyribonucleoside 5'-diphosphate + ATP = a 2'-deoxyribonucleoside 5'-triphosphate + ADP. It carries out the reaction a ribonucleoside 5'-diphosphate + ATP = a ribonucleoside 5'-triphosphate + ADP. Major role in the synthesis of nucleoside triphosphates other than ATP. The ATP gamma phosphate is transferred to the NDP beta phosphate via a ping-pong mechanism, using a phosphorylated active-site intermediate. This NDK is microtubule-associated. In Oryza sativa subsp. indica (Rice), this protein is Nucleoside diphosphate kinase 1 (NDKR).